The sequence spans 117 residues: Protein RALF-like 27 (117 aa).

The N-terminal stretch at 1–27 is a signal peptide; it reads MTKTFFSFSFFFTSSLLLLLAATSATA. The propeptide at 28–71 is removed in mature form; the sequence is STGNVTSGLRYDGCAPGDTVGECITATVEEEDEEGVEAVVRRIL. N-linked (GlcNAc...) asparagine glycosylation is present at Asn31. Disulfide bonds link Cys88–Cys96 and Cys107–Cys113.

Belongs to the plant rapid alkalinization factor (RALF) family.

The protein resides in the secreted. Functionally, cell signaling peptide that may regulate plant stress, growth, and development. Mediates a rapid alkalinization of extracellular space by mediating a transient increase in the cytoplasmic Ca(2+) concentration leading to a calcium-dependent signaling events through a cell surface receptor and a concomitant activation of some intracellular mitogen-activated protein kinases. This chain is Protein RALF-like 27 (RALFL27), found in Arabidopsis thaliana (Mouse-ear cress).